Reading from the N-terminus, the 34-residue chain is U1-poneritoxin-Na2a (34 aa).

In terms of tissue distribution, expressed by the venom gland.

It localises to the secreted. Functionally, may have antimicrobial properties, like most ant linear peptides. This is U1-poneritoxin-Na2a from Neoponera apicalis (Ant).